The chain runs to 514 residues: Beta-secretase 2 (514 aa).

A signal peptide spans 1–20; that stretch reads MGALLRALLLPLLAQWLLRA. Positions 21–62 are excised as a propeptide; that stretch reads VPVLAPAPFTLPLQVAGAANHRASTVPGLGTPELPRADGLAL. Over 21-469 the chain is Extracellular; that stretch reads VPVLAPAPFT…NEPILWIVSY (449 aa). One can recognise a Peptidase A1 domain in the interval 88 to 425; sequence YYLEMLIGTP…DRAQRRVGFA (338 aa). Residue aspartate 106 is part of the active site. Asparagine 166 is a glycosylation site (N-linked (GlcNAc...) asparagine). 3 disulfide bridges follow: cysteine 229/cysteine 429, cysteine 288/cysteine 453, and cysteine 340/cysteine 389. Aspartate 299 is a catalytic residue. Asparagine 362 is a glycosylation site (N-linked (GlcNAc...) asparagine). Residues 470–490 traverse the membrane as a helical segment; it reads ALMSVCGAILLVLILLLLFPL. The Cytoplasmic segment spans residues 491 to 514; that stretch reads HCRHAPRDPEVVNDESSLVRHRWK.

Belongs to the peptidase A1 family. Monomer. Interacts with RTN3 and RTN4. In terms of processing, undergoes autoproteolytic cleavage. Post-translationally, glycosylated.

It is found in the cell membrane. The protein resides in the golgi apparatus. It localises to the endoplasmic reticulum. The protein localises to the endosome. Its subcellular location is the melanosome. The enzyme catalyses Broad endopeptidase specificity. Cleaves Glu-Val-Asn-Leu-|-Asp-Ala-Glu-Phe in the Swedish variant of Alzheimer's amyloid precursor protein.. Responsible for the proteolytic processing of the amyloid precursor protein (APP). Cleaves APP, between residues 690 and 691, leading to the generation and extracellular release of beta-cleaved soluble APP, and a corresponding cell-associated C-terminal fragment which is later released by gamma-secretase. It has also been shown that it can cleave APP between residues 671 and 672. Involved in the proteolytic shedding of PMEL at early stages of melanosome biogenesis. Cleaves PMEL within the M-beta fragment to release the amyloidogenic PMEL luminal fragment containing M-alpha and a small portion of M-beta N-terminus. This is a prerequisite step for subsequent processing and assembly of PMEL fibrils into amyloid sheets. Responsible also for the proteolytic processing of CLTRN in pancreatic beta cells. The polypeptide is Beta-secretase 2 (Bace2) (Rattus norvegicus (Rat)).